Reading from the N-terminus, the 145-residue chain is Endosomal/vacuolar adapter protein YPT35 (145 aa).

The PX domain maps to 32 to 145 (ISDVLVGEHH…STVVREFVLG (114 aa)).

It belongs to the YPT35 family.

The protein localises to the endosome membrane. The protein resides in the vacuole membrane. Functionally, recruits the lipid transfer protein VPS13 to endosomal and vacuolar membranes. The chain is Endosomal/vacuolar adapter protein YPT35 (YPT35) from Meyerozyma guilliermondii (strain ATCC 6260 / CBS 566 / DSM 6381 / JCM 1539 / NBRC 10279 / NRRL Y-324) (Yeast).